A 509-amino-acid polypeptide reads, in one-letter code: Zinc metalloproteinase aureolysin (509 aa).

The first 27 residues, 1–27 (MRKFSRYAFTSMATVTLLSSLTPAALA), serve as a signal peptide directing secretion. Positions 28-208 (SDTNHKPATS…VVEKTNLVKE (181 aa)) are excised as a propeptide. Position 348 (D348) interacts with Ca(2+). H352 contacts Zn(2+). The active site involves E353. Residues H356 and E376 each contribute to the Zn(2+) site. Ca(2+) contacts are provided by D387, E389, D390, L392, E395, Y398, T399, K402, and D405. Residue H436 is the Proton donor of the active site.

The protein belongs to the peptidase M4 family. In terms of assembly, monomer. The cofactor is Ca(2+). Requires Zn(2+) as cofactor.

The catalysed reaction is Cleavage of insulin B chain with specificity similar to that of thermolysin, preferring hydrophobic P1' residues. Activates the glutamyl endopeptidase (EC 3.4.21.19) of Staphylococcus aureus.. Plays an essential role in immune evasion by helping bacteria to resist complement-mediated killing by neutrophils. Inhibits the deposition of host C3b on bacterial surfaces and the release of the chemoattractant C5a by cleaving the central complement protein C3. The cleavage site renders the C3b molecule vulnerable to proteolytic degradation by host regulators. Cleaves and inactivates host SERPINA1, which is an endogenous protease inhibitor essential for controlling neutrophil serine protease elastase. Also plays an essential role in the cleavage and subsequent activation of the serine protease SspA (glutamyl endopeptidase) which is involved in colonization and infection of human tissues. The sequence is that of Zinc metalloproteinase aureolysin from Staphylococcus aureus.